The primary structure comprises 354 residues: Uroporphyrinogen decarboxylase (354 aa).

Substrate is bound by residues 27–31 (RQAGR), aspartate 77, tyrosine 154, serine 209, and histidine 327.

The protein belongs to the uroporphyrinogen decarboxylase family. As to quaternary structure, homodimer.

It is found in the cytoplasm. The enzyme catalyses uroporphyrinogen III + 4 H(+) = coproporphyrinogen III + 4 CO2. It participates in porphyrin-containing compound metabolism; protoporphyrin-IX biosynthesis; coproporphyrinogen-III from 5-aminolevulinate: step 4/4. In terms of biological role, catalyzes the decarboxylation of four acetate groups of uroporphyrinogen-III to yield coproporphyrinogen-III. In Shewanella putrefaciens (strain CN-32 / ATCC BAA-453), this protein is Uroporphyrinogen decarboxylase.